Consider the following 442-residue polypeptide: Histidine--tRNA ligase (442 aa).

This sequence belongs to the class-II aminoacyl-tRNA synthetase family. Homodimer.

Its subcellular location is the cytoplasm. It catalyses the reaction tRNA(His) + L-histidine + ATP = L-histidyl-tRNA(His) + AMP + diphosphate + H(+). The chain is Histidine--tRNA ligase (hisS) from Helicobacter pylori (strain J99 / ATCC 700824) (Campylobacter pylori J99).